Consider the following 257-residue polypeptide: 1-(5-phosphoribosyl)-5-[(5-phosphoribosylamino)methylideneamino] imidazole-4-carboxamide isomerase (257 aa).

Catalysis depends on D8, which acts as the Proton acceptor. Residue D130 is the Proton donor of the active site.

Belongs to the HisA/HisF family.

The protein localises to the cytoplasm. It catalyses the reaction 1-(5-phospho-beta-D-ribosyl)-5-[(5-phospho-beta-D-ribosylamino)methylideneamino]imidazole-4-carboxamide = 5-[(5-phospho-1-deoxy-D-ribulos-1-ylimino)methylamino]-1-(5-phospho-beta-D-ribosyl)imidazole-4-carboxamide. Its pathway is amino-acid biosynthesis; L-histidine biosynthesis; L-histidine from 5-phospho-alpha-D-ribose 1-diphosphate: step 4/9. In Chlorobium chlorochromatii (strain CaD3), this protein is 1-(5-phosphoribosyl)-5-[(5-phosphoribosylamino)methylideneamino] imidazole-4-carboxamide isomerase.